Consider the following 341-residue polypeptide: GDP-fucose transporter 1 (341 aa).

10 helical membrane-spanning segments follow: residues 17–37 (LVIG…LAIT), 41–61 (YPGL…YLLG), 71–91 (FTWD…LAIF), 103–123 (DTFI…DTVF), 132–152 (LTFL…ATDS), 156–176 (LTAY…MVYI), 187–207 (IWGL…VFWF), 231–251 (AFSS…FGFA), 260–280 (AFTV…VLIW), and 283–303 (HATP…VGYQ). Residues 316–341 (SEKDSEKGEEDEELTQLVPGKLASVV) are disordered.

This sequence belongs to the nucleotide-sugar transporter family. GDP-Mannose:GMP antiporter (GMA) (TC 2.A.7.13) subfamily. In terms of tissue distribution, ubiquitous.

The protein localises to the golgi apparatus membrane. In terms of biological role, acts as the major nucleotide-sugar transporter for the import of GDP-Fucose into the Golgi lumen. Transports GDP-Fucose in a strict counter-exchange mode. Is required for proper plant growth and development. Also acts as a GDP-mannose transporter that may be involved in the import of GDP-mannose from the cytoplasm into the Golgi lumen. This is GDP-fucose transporter 1 from Arabidopsis thaliana (Mouse-ear cress).